We begin with the raw amino-acid sequence, 597 residues long: MLLLLLLLLLPPLLCGRVGAKEQKDYLLTMQKSVTVQEGLCVSVLCSFSYPQNGWTDSDPVHGYWFRAGDHVSRNVPVATNNPARAVQEETRDRFHLLGDPQNKDCTLSIRDTRESDAGTYVFRVERGNMKWNYKYDQLSVNVTASQDLLSRYRLEVPESVTVQEGLCVSVPCSVLYPHCNWTASSPVYGSWFKEGADIPCDIPVATNTPSGKVQEDTQGRFLLLGDPQTNNCSLSIRDARKGDSGKYYFQVERGSRKWNYIYDKLSVHVTALTHLPTFSIPGTLESGHPRNLTCSVPWACEQGTPPTITWMGASVSSLEPTISRSSMLSLIPKPQDHGTSLTCQVTLPGAGVTTTRAVRLNISYPPQNLTMTVFQGDGTASTTLRNGSALSVLEGQSLHLVCAVDSNPPARLSWTWGSLTLSPSQSSNLGVLELPRVHVKDEGEFTCRAQNPLGSQHISLSLSLQNEYTGKMRPISGVTLGAVGGAGATALVFLSFCIIFVVVRSCRKKSARPAVGVGDTGMEDTNAVRGSASQGPLIESPADDSPPHHAPPALATPFPEEGEIQYASLSFHKARPQYPQEQEAIGYEYSEINILK.

Positions 1-20 (MLLLLLLLLLPPLLCGRVGA) are cleaved as a signal peptide. Ig-like V-type domains follow at residues 21 to 144 (KEQK…VNVT) and 145 to 271 (ASQD…VHVT). Residues 21–483 (KEQKDYLLTM…RPISGVTLGA (463 aa)) lie on the Extracellular side of the membrane. C46 and C106 are disulfide-bonded. N-linked (GlcNAc...) asparagine glycosylation is found at N142, N181, N232, and N292. Cystine bridges form between C168/C301, C173/C233, and C295/C344. The Ig-like C2-type 1 domain maps to 277 to 360 (PTFSIPGTLE…AGVTTTRAVR (84 aa)). N-linked (GlcNAc...) asparagine glycans are attached at residues N362, N369, and N387. The region spanning 367-464 (PQNLTMTVFQ…GSQHISLSLS (98 aa)) is the Ig-like C2-type 2 domain. C403 and C448 are oxidised to a cystine. The helical transmembrane segment at 484-504 (VGGAGATALVFLSFCIIFVVV) threads the bilayer. The Cytoplasmic portion of the chain corresponds to 505–597 (RSCRKKSARP…YEYSEINILK (93 aa)). Positions 514–558 (PAVGVGDTGMEDTNAVRGSASQGPLIESPADDSPPHHAPPALATP) are disordered. Positions 565–570 (IQYASL) match the ITIM motif motif. 2 positions are modified to phosphotyrosine: Y567 and Y590. The short motif at 588 to 593 (YEYSEI) is the SLAM-like motif element.

The protein belongs to the immunoglobulin superfamily. SIGLEC (sialic acid binding Ig-like lectin) family.

It localises to the membrane. Putative adhesion molecule that mediates sialic-acid dependent binding to cells. The sialic acid recognition site may be masked by cis interactions with sialic acids on the same cell surface. In Pan troglodytes (Chimpanzee), this protein is Sialic acid-binding Ig-like lectin 12 (SIGLEC12).